A 366-amino-acid chain; its full sequence is uncharacterized protein (366 aa).

6 consecutive transmembrane segments (helical) span residues 164–184 (IPLI…FADI), 188–208 (IVVG…RKLL), 223–243 (VFPI…IYSL), 256–276 (FIGE…LILM), 299–319 (FFCL…GEYL), and 325–345 (FIMF…LSVI).

This sequence to A.fulgidus AF2058.

It localises to the cell membrane. This is an uncharacterized protein from Methanocaldococcus jannaschii (strain ATCC 43067 / DSM 2661 / JAL-1 / JCM 10045 / NBRC 100440) (Methanococcus jannaschii).